We begin with the raw amino-acid sequence, 706 residues long: Integrator complex subunit 13 (706 aa).

Positions 564–603 (PPEEEERKKRGRKREDKEDKSEKAVKDYEQEKSWQDSERL) are disordered. Positions 567-622 (EEERKKRGRKREDKEDKSEKAVKDYEQEKSWQDSERLKGILERGKEELAEAEIIKD) form a coiled coil. The short motif at 572–582 (KRGRKREDKED) is the Nuclear localization signal (NLS) element. A Glycyl lysine isopeptide (Lys-Gly) (interchain with G-Cter in SUMO2) cross-link involves residue Lys611. The segment covering 615–636 (AEAEIIKDSPDSPEPPNKKPLV) has biased composition (basic and acidic residues). Positions 615–650 (AEAEIIKDSPDSPEPPNKKPLVEMDETPQVEKSKGP) are disordered. Ser623, Ser626, and Ser678 each carry phosphoserine. The tract at residues 649–694 (GPVSLLSLWSNRINTANSRKHQEFAGRLNSVNNRAELYQHLKEENG) is cleavage module binding motif (CMBM).

Belongs to the Integrator subunit 13 family. As to quaternary structure, component of the Integrator complex, composed of core subunits INTS1, INTS2, INTS3, INTS4, INTS5, INTS6, INTS7, INTS8, INTS9/RC74, INTS10, INTS11/CPSF3L, INTS12, INTS13, INTS14 and INTS15. The core complex associates with protein phosphatase 2A subunits PPP2CA and PPP2R1A, to form the Integrator-PP2A (INTAC) complex. INTS13 is part of the tail subcomplex, composed of INTS10, INTS13, INTS14 and INTS15. Interacts with transcription factors ZNF609 and ZNF655. Interacts with PAFAH1B1; this interaction may be required for proper recruitment of dynein complexes to the nuclear envelope at prophase. Widely expressed. Tends to be up-regulated in seminomas compared to normal testis.

It is found in the nucleus. The protein resides in the cytoplasm. Component of the integrator complex, a multiprotein complex that terminates RNA polymerase II (Pol II) transcription in the promoter-proximal region of genes. The integrator complex provides a quality checkpoint during transcription elongation by driving premature transcription termination of transcripts that are unfavorably configured for transcriptional elongation: the complex terminates transcription by (1) catalyzing dephosphorylation of the C-terminal domain (CTD) of Pol II subunit POLR2A/RPB1 and SUPT5H/SPT5, (2) degrading the exiting nascent RNA transcript via endonuclease activity and (3) promoting the release of Pol II from bound DNA. The integrator complex is also involved in terminating the synthesis of non-coding Pol II transcripts, such as enhancer RNAs (eRNAs), small nuclear RNAs (snRNAs), telomerase RNAs and long non-coding RNAs (lncRNAs). Within the integrator complex, INTS13 is part of the integrator tail module and acts as a platform for the recruitment of transcription factors at promoters. At prophase, mediates recruitment of cytoplasmic dynein to the nuclear envelope, a step important for proper centrosome-nucleus coupling. At G2/M phase, may be required for proper spindle formation and execution of cytokinesis. In Homo sapiens (Human), this protein is Integrator complex subunit 13.